We begin with the raw amino-acid sequence, 524 residues long: Ribonuclease Y (524 aa).

Residues 3–23 traverse the membrane as a helical segment; that stretch reads IVINLLLLVLAALVAFVAGFF. Positions 214 to 280 constitute a KH domain; the sequence is ALSVVHIQSD…KLTLKKLLAD (67 aa). The region spanning 340 to 432 is the HD domain; the sequence is LLQHSREVAM…VDAANTISLS (93 aa).

This sequence belongs to the RNase Y family.

Its subcellular location is the cell membrane. Functionally, endoribonuclease that initiates mRNA decay. This Chlorobium chlorochromatii (strain CaD3) protein is Ribonuclease Y.